The chain runs to 598 residues: MKQIRNFSIIAHIDHGKSTLSDRIIQICGGLTDREMAEQVLDSMDLERERGITIKAQSVTLDYKANDGQLYQLNFIDTPGHVDFSYEVSRSLAACEGALLVVDAGQGVEAQTLANCYTALDMNLEVVPVLNKIDLPAAEPERVAEEIEDIVGIDATDAVRCSAKTGVGVQDVIERLVKEIPAPEGNSDEPLQALIIDSWFDNYLGVVSLVRIKNGTLRKGDKIKVMSTGQVYNADRLGIFTPKRVDRDVLGCGEVGWLVCAIKDILGAPVGDTLTLARQPAEKPLPGFKKVKPQVYAGLFPVSSDDYEAFRDALGKLSLNDASLFYEPESSSALGFGFRCGFLGLLHMEIIQERLEREYDLDLITTAPTVVYEVETTSHDTLYVDSPSKLPPLNNIEELREPIAECHMLLPQEYLGNVITLCVEKRGVQTNMVYHGKQVALTYEIPMAEVVLDFFDRLKSTSRGYASLDYNFTRFQSSDMVRVDVLINAERVDALALITHRGNAQYRGRELVEKMKELIPRQQFDIAIQAAIGNHIIARSTVKQLRKNVLAKCYGGDVSRKKKLLQKQKEGKKRMKQVGNVELPQEAFLAILHVGKDN.

A tr-type G domain is found at 2–184 (KQIRNFSIIA…RLVKEIPAPE (183 aa)). GTP contacts are provided by residues 14–19 (DHGKST) and 131–134 (NKID).

Belongs to the TRAFAC class translation factor GTPase superfamily. Classic translation factor GTPase family. LepA subfamily.

Its subcellular location is the cell inner membrane. It catalyses the reaction GTP + H2O = GDP + phosphate + H(+). Functionally, required for accurate and efficient protein synthesis under certain stress conditions. May act as a fidelity factor of the translation reaction, by catalyzing a one-codon backward translocation of tRNAs on improperly translocated ribosomes. Back-translocation proceeds from a post-translocation (POST) complex to a pre-translocation (PRE) complex, thus giving elongation factor G a second chance to translocate the tRNAs correctly. Binds to ribosomes in a GTP-dependent manner. In Photorhabdus laumondii subsp. laumondii (strain DSM 15139 / CIP 105565 / TT01) (Photorhabdus luminescens subsp. laumondii), this protein is Elongation factor 4.